We begin with the raw amino-acid sequence, 318 residues long: Lymphatic vessel endothelial hyaluronic acid receptor 1 (318 aa).

A signal peptide spans 1-23 (MLQHTSLVLLLASIWTTRHPVQG). Residues 24 to 234 (ADLVQDLSIS…EAAGFGGVPT (211 aa)) lie on the Extracellular side of the membrane. Residues 39-129 (GVALVGRNKN…SQKFKAYCHN (91 aa)) enclose the Link domain. Asn-52 carries N-linked (GlcNAc...) asparagine glycosylation. Intrachain disulfides connect Cys-60–Cys-127 and Cys-84–Cys-105. Asn-129 is a glycosylation site (N-linked (GlcNAc...) asparagine). Residues 235 to 255 (ALLVLALLFFGAAAVLAVCYV) traverse the membrane as a helical segment. Topologically, residues 256-318 (KRYVKAFPFT…TTVRCLEAEV (63 aa)) are cytoplasmic. The span at 284-305 (ADDVNANEESKKTIKNPEEAKS) shows a compositional bias: basic and acidic residues. The disordered stretch occupies residues 284–318 (ADDVNANEESKKTIKNPEEAKSPPKTTVRCLEAEV).

As to quaternary structure, homodimer; disulfide-linked. Interacts with PDGFB and IGFBP3. Forms a transient ternary complex with PDGFB and PDGFRB in TGN. In terms of processing, O-glycosylated.

It localises to the membrane. Ligand-specific transporter trafficking between intracellular organelles (TGN) and the plasma membrane. Plays a role in autocrine regulation of cell growth mediated by growth regulators containing cell surface retention sequence binding (CRS). May act as a hyaluronan (HA) transporter, either mediating its uptake for catabolism within lymphatic endothelial cells themselves, or its transport into the lumen of afferent lymphatic vessels for subsequent re-uptake and degradation in lymph nodes. Binds to pericelluar hyaluronan matrices deposited on the surface of leukocytes and facilitates cell adhesion and migration through lymphatic endothelium. The sequence is that of Lymphatic vessel endothelial hyaluronic acid receptor 1 (Lyve1) from Mus musculus (Mouse).